The following is a 1260-amino-acid chain: MGTLGFVLGTAAMDHQQVLIDQLVDQVKNTPADDTFYYLVPNHIKFETEINVLAGLRDRQGLSGSDRFASSRVQVLSFSRLAWYLLRDTPAFQKQHLSKIGMAMLTSQVVQEQASDLRLYASEVKQPGFIQKMTAQLEELKNANITADDLTDIIYRVKSANDPAANQAWLAKMYDVETIYHAYEARLRDRYIGNSELYRQLVSYLQKSPEVAKMHFFIDRFAQFTANEQQVVDALITNAASTTISLTLDRGYPDQNHPNPQELPPKNNLFYSSAMQFHRLWKFGQMHQKEVKVLQNVAFATTPRVDAELQQVDSYFKRYASEPIGPGEREELLDPQNIQFMTTTNRMTELNNVATQIRQLVASGKYRYRDFLILSRHLDGYQTMIEPVFAAHNIPVFNDHERLMDNHPLVTLLTTLLELPQRGYRTADIIQLLKTWLLVPRTGTGDLMGLSDFQAAVFTTENWCLKQAIEGKNAWTTNDPEKIKQLWQAPGTNLTDPKYEQSRLEKLNDQLALVKDFVANHLLPVFDQFKQAQTGQELATALYQFLAAMGVTDRLYAWQQYQSTRDLDLARQPQQVWTTFCQILQEYVEILGQQELRDGTNEVLADFSELLQAGFAAAQYSQIPATLDQVVVSETGIVQSENRKVVFMIGSTDDVMPEMQESDSLLTDQDKDILSAYLDEDFQYLPGTAIDQLIDEPFVHYTGFMNAKEQLIFSAPQSDSDDKELSISPYMHDMARYFGQPVREYPLATSKAGQDNAIDFVSAPLATINRLVEVSRQIRDEQGVGIDRQPVMPVGWQTVAESLVKLAKQWQQSADAKVQAEGISLGQRLSLVAAGFHYQNKIDSLGNKLAQALYLRAAPDDERGRVLYASISQLQDFYINQYEYFLKYGLRLQKRDELTLSNDRIGTFFHKAMETFVTTIRENNLSFADLAHKDNQMQRDQLIDHALVTAQENQPTLLRLINSSAQAQFQYQQLTAIVKTMLITLCRQAEYTGSQPVKTEVQFGRIGNQQPGNLGSLDYPLKDNHHIYLRGRIDRIDNLKQGNNNFLTVVDYKSSNHLFDLTSAYYGLSLQLLTYLNGLQANLTELETNNPRLAGALYLRLNNPTIKAAELKKSSLDDLKLKEHQYKGILLNDPQLLRELDKSLDKQAFLYPLKEYKNGKIKANKEALLVTPQQLDWLQNMNKELVINAGNQILSGDLKLNPYRLLTGSNRRTGLDYSDFLDVFQFDNMLDQQNYRDLNPNLAKEAFDNVVQDDDEEDKK.

Belongs to the helicase family. AddB/RexB type 2 subfamily. As to quaternary structure, heterodimer of AddA and RexB. Mg(2+) serves as cofactor.

Functionally, the heterodimer acts as both an ATP-dependent DNA helicase and an ATP-dependent, dual-direction single-stranded exonuclease. Recognizes the chi site generating a DNA molecule suitable for the initiation of homologous recombination. This subunit has 5' -&gt; 3' nuclease activity but not helicase activity. The sequence is that of ATP-dependent helicase/deoxyribonuclease subunit B from Limosilactobacillus reuteri (strain DSM 20016) (Lactobacillus reuteri).